The following is a 72-amino-acid chain: Late effector protein 1 (72 aa).

Residues 1–22 form the signal peptide; the sequence is MKCYLVVVVAALCTLVAQGSVG. Asn-66 carries N-linked (GlcNAc...) asparagine glycosylation.

This sequence belongs to the lep1 family. Interacts at the cell wall with secreted rep1 repellent peptides.

It is found in the secreted. Its subcellular location is the cell wall. Its function is as follows. Core effector contributing to spore formation and tumor formation at the host plant. Modulates surface hydrophobicity promoting cell-cell or cell-surface contacts. Lep1 and rep1 interact in aerial hyphae to form a strong hydrophobic layer. Plays a crucial role in hyphal aggregation that might be a prerequisite for strong proliferation of diploid cells and for induction of the morphological changes associated with spore formation. The protein is Late effector protein 1 of Sporisorium reilianum (strain SRZ2) (Maize head smut fungus).